Here is a 258-residue protein sequence, read N- to C-terminus: Putative phosphoenolpyruvate synthase regulatory protein (258 aa).

146 to 153 (GVSRVGKT) is a binding site for ADP.

The protein belongs to the pyruvate, phosphate/water dikinase regulatory protein family. PSRP subfamily.

The catalysed reaction is [pyruvate, water dikinase] + ADP = [pyruvate, water dikinase]-phosphate + AMP + H(+). It catalyses the reaction [pyruvate, water dikinase]-phosphate + phosphate + H(+) = [pyruvate, water dikinase] + diphosphate. Functionally, bifunctional serine/threonine kinase and phosphorylase involved in the regulation of the phosphoenolpyruvate synthase (PEPS) by catalyzing its phosphorylation/dephosphorylation. This chain is Putative phosphoenolpyruvate synthase regulatory protein, found in Thiobacillus denitrificans (strain ATCC 25259 / T1).